We begin with the raw amino-acid sequence, 235 residues long: Putative N-acetylmannosamine-6-phosphate 2-epimerase (235 aa).

It belongs to the NanE family.

It catalyses the reaction an N-acyl-D-glucosamine 6-phosphate = an N-acyl-D-mannosamine 6-phosphate. Its pathway is amino-sugar metabolism; N-acetylneuraminate degradation; D-fructose 6-phosphate from N-acetylneuraminate: step 3/5. Functionally, converts N-acetylmannosamine-6-phosphate (ManNAc-6-P) to N-acetylglucosamine-6-phosphate (GlcNAc-6-P). The chain is Putative N-acetylmannosamine-6-phosphate 2-epimerase from Photobacterium profundum (strain SS9).